Here is a 691-residue protein sequence, read N- to C-terminus: Elongation factor G (691 aa).

In terms of domain architecture, tr-type G spans 8 to 282; sequence EQTRNIGIMA…AVIDYLPAPT (275 aa). GTP is bound by residues 17-24, 81-85, and 135-138; these read AHIDAGKT, DTPGH, and NKMD.

Belongs to the TRAFAC class translation factor GTPase superfamily. Classic translation factor GTPase family. EF-G/EF-2 subfamily.

The protein resides in the cytoplasm. Its function is as follows. Catalyzes the GTP-dependent ribosomal translocation step during translation elongation. During this step, the ribosome changes from the pre-translocational (PRE) to the post-translocational (POST) state as the newly formed A-site-bound peptidyl-tRNA and P-site-bound deacylated tRNA move to the P and E sites, respectively. Catalyzes the coordinated movement of the two tRNA molecules, the mRNA and conformational changes in the ribosome. This Natranaerobius thermophilus (strain ATCC BAA-1301 / DSM 18059 / JW/NM-WN-LF) protein is Elongation factor G.